Reading from the N-terminus, the 81-residue chain is Cytotoxin 2b (81 aa).

A signal peptide spans 1–21 (MKTLLLTLVVVTTVCLDLGYT). 4 disulfides stabilise this stretch: cysteine 24–cysteine 42, cysteine 35–cysteine 59, cysteine 63–cysteine 74, and cysteine 75–cysteine 80.

Belongs to the three-finger toxin family. Short-chain subfamily. Type IA cytotoxin sub-subfamily. In terms of assembly, monomer in solution; Homodimer and oligomer in the presence of negatively charged lipids forming a pore with a size ranging between 20 and 30 Angstroms. Expressed by the venom gland.

It localises to the secreted. The protein resides in the target cell membrane. In terms of biological role, shows cytolytic activity on many different cells by forming pore in lipid membranes. In vivo, increases heart rate or kills the animal by cardiac arrest. In addition, it binds to heparin with high affinity, interacts with Kv channel-interacting protein 1 (KCNIP1) in a calcium-independent manner, and binds to integrin alpha-V/beta-3 (ITGAV/ITGB3) with moderate affinity. The sequence is that of Cytotoxin 2b from Naja sputatrix (Malayan spitting cobra).